Consider the following 184-residue polypeptide: uncharacterized protein (184 aa).

Residues 1–24 (MGISDQINSNLSSQSPFTVSTNPS) are disordered.

This is an uncharacterized protein from Dictyostelium discoideum (Social amoeba).